The chain runs to 237 residues: Phosphoribosylaminoimidazole-succinocarboxamide synthase (237 aa).

This sequence belongs to the SAICAR synthetase family.

The enzyme catalyses 5-amino-1-(5-phospho-D-ribosyl)imidazole-4-carboxylate + L-aspartate + ATP = (2S)-2-[5-amino-1-(5-phospho-beta-D-ribosyl)imidazole-4-carboxamido]succinate + ADP + phosphate + 2 H(+). The protein operates within purine metabolism; IMP biosynthesis via de novo pathway; 5-amino-1-(5-phospho-D-ribosyl)imidazole-4-carboxamide from 5-amino-1-(5-phospho-D-ribosyl)imidazole-4-carboxylate: step 1/2. The chain is Phosphoribosylaminoimidazole-succinocarboxamide synthase from Listeria innocua serovar 6a (strain ATCC BAA-680 / CLIP 11262).